The following is a 101-amino-acid chain: Small ribosomal subunit protein uS14 (101 aa).

It belongs to the universal ribosomal protein uS14 family. As to quaternary structure, part of the 30S ribosomal subunit. Contacts proteins S3 and S10.

Functionally, binds 16S rRNA, required for the assembly of 30S particles and may also be responsible for determining the conformation of the 16S rRNA at the A site. The chain is Small ribosomal subunit protein uS14 from Bordetella petrii (strain ATCC BAA-461 / DSM 12804 / CCUG 43448).